The chain runs to 207 residues: LPS-assembly lipoprotein LptE (207 aa).

An N-terminal signal peptide occupies residues 1–19 (MRHRILMLLLGLAVLVTAG). Cysteine 20 carries the N-palmitoyl cysteine lipid modification. The S-diacylglycerol cysteine moiety is linked to residue cysteine 20.

It belongs to the LptE lipoprotein family. As to quaternary structure, component of the lipopolysaccharide transport and assembly complex. Interacts with LptD.

It localises to the cell outer membrane. In terms of biological role, together with LptD, is involved in the assembly of lipopolysaccharide (LPS) at the surface of the outer membrane. Required for the proper assembly of LptD. Binds LPS and may serve as the LPS recognition site at the outer membrane. This chain is LPS-assembly lipoprotein LptE, found in Yersinia enterocolitica serotype O:8 / biotype 1B (strain NCTC 13174 / 8081).